Consider the following 391-residue polypeptide: Formate-dependent phosphoribosylglycinamide formyltransferase (391 aa).

Residues 20–21 (EL) and E80 each bind N(1)-(5-phospho-beta-D-ribosyl)glycinamide. ATP contacts are provided by residues R112, K153, 158-163 (SSGKGQ), 193-196 (EGFV), and E201. In terms of domain architecture, ATP-grasp spans 117-306 (RLAAEELGLP…EFALHVRAFT (190 aa)). E265 and E277 together coordinate Mg(2+). Residues D284, K354, and 361–362 (RR) contribute to the N(1)-(5-phospho-beta-D-ribosyl)glycinamide site.

It belongs to the PurK/PurT family. Homodimer.

The catalysed reaction is N(1)-(5-phospho-beta-D-ribosyl)glycinamide + formate + ATP = N(2)-formyl-N(1)-(5-phospho-beta-D-ribosyl)glycinamide + ADP + phosphate + H(+). The protein operates within purine metabolism; IMP biosynthesis via de novo pathway; N(2)-formyl-N(1)-(5-phospho-D-ribosyl)glycinamide from N(1)-(5-phospho-D-ribosyl)glycinamide (formate route): step 1/1. Involved in the de novo purine biosynthesis. Catalyzes the transfer of formate to 5-phospho-ribosyl-glycinamide (GAR), producing 5-phospho-ribosyl-N-formylglycinamide (FGAR). Formate is provided by PurU via hydrolysis of 10-formyl-tetrahydrofolate. This Vibrio cholerae serotype O1 (strain ATCC 39315 / El Tor Inaba N16961) protein is Formate-dependent phosphoribosylglycinamide formyltransferase.